Consider the following 289-residue polypeptide: uncharacterized protein (289 aa).

Over residues 80-96 (PLNESRTSFKNIPQSRN) the composition is skewed to polar residues. Disordered stretches follow at residues 80 to 101 (PLNE…PRDY) and 136 to 157 (PREN…RMRE).

This is an uncharacterized protein from Acanthamoeba polyphaga (Amoeba).